A 552-amino-acid polypeptide reads, in one-letter code: Glutamate--tRNA ligase (552 aa).

The 'HIGH' region motif lies at Pro-102–His-112.

This sequence belongs to the class-I aminoacyl-tRNA synthetase family. Glutamate--tRNA ligase type 2 subfamily.

It is found in the cytoplasm. The catalysed reaction is tRNA(Glu) + L-glutamate + ATP = L-glutamyl-tRNA(Glu) + AMP + diphosphate. In terms of biological role, catalyzes the attachment of glutamate to tRNA(Glu) in a two-step reaction: glutamate is first activated by ATP to form Glu-AMP and then transferred to the acceptor end of tRNA(Glu). This Methanothermobacter marburgensis (strain ATCC BAA-927 / DSM 2133 / JCM 14651 / NBRC 100331 / OCM 82 / Marburg) (Methanobacterium thermoautotrophicum) protein is Glutamate--tRNA ligase.